Here is a 154-residue protein sequence, read N- to C-terminus: Putative lipoprotein MAB_4074c (154 aa).

Residues M1 to G21 form the signal peptide. C22 carries N-palmitoyl cysteine lipidation. C22 carries the S-diacylglycerol cysteine lipid modification.

This sequence belongs to the mycobacterial 19 kDa antigen family.

The protein localises to the cell membrane. The protein is Putative lipoprotein MAB_4074c of Mycobacteroides abscessus (strain ATCC 19977 / DSM 44196 / CCUG 20993 / CIP 104536 / JCM 13569 / NCTC 13031 / TMC 1543 / L948) (Mycobacterium abscessus).